A 498-amino-acid polypeptide reads, in one-letter code: Archaemetzincin-1 (498 aa).

Residue His261 participates in Zn(2+) binding. The active-site Proton acceptor is Glu262. Zn(2+) is bound by residues His265, Cys272, Cys277, Cys296, and Cys299. Residues 332–381 (QEAGEPSVWEDTPPASADSGMCCESDSEPGTSVSEPLTPDAGSHTFASGP) form a disordered region.

Belongs to the peptidase M54 family. The cofactor is Zn(2+).

Its function is as follows. Probable zinc metalloprotease. This chain is Archaemetzincin-1 (AMZ1), found in Homo sapiens (Human).